Here is a 151-residue protein sequence, read N- to C-terminus: Protein SprT-like (151 aa).

The SprT-like domain occupies 7–146 (QSLTESIAIK…CGRCGGILKL (140 aa)). Residue His67 participates in Zn(2+) binding. Glu68 is a catalytic residue. His71 is a binding site for Zn(2+).

This sequence belongs to the SprT family. Zn(2+) is required as a cofactor.

The protein localises to the cytoplasm. The chain is Protein SprT-like from Staphylococcus epidermidis (strain ATCC 35984 / DSM 28319 / BCRC 17069 / CCUG 31568 / BM 3577 / RP62A).